The sequence spans 285 residues: Bifunctional protein FolD (285 aa).

Residues 164 to 166 (GRS), Ser-189, and Ile-230 each bind NADP(+).

Belongs to the tetrahydrofolate dehydrogenase/cyclohydrolase family. Homodimer.

The catalysed reaction is (6R)-5,10-methylene-5,6,7,8-tetrahydrofolate + NADP(+) = (6R)-5,10-methenyltetrahydrofolate + NADPH. It catalyses the reaction (6R)-5,10-methenyltetrahydrofolate + H2O = (6R)-10-formyltetrahydrofolate + H(+). It functions in the pathway one-carbon metabolism; tetrahydrofolate interconversion. Its function is as follows. Catalyzes the oxidation of 5,10-methylenetetrahydrofolate to 5,10-methenyltetrahydrofolate and then the hydrolysis of 5,10-methenyltetrahydrofolate to 10-formyltetrahydrofolate. The chain is Bifunctional protein FolD from Oceanobacillus iheyensis (strain DSM 14371 / CIP 107618 / JCM 11309 / KCTC 3954 / HTE831).